A 400-amino-acid polypeptide reads, in one-letter code: Tryptophan synthase beta chain (400 aa).

At lysine 90 the chain carries N6-(pyridoxal phosphate)lysine.

It belongs to the TrpB family. In terms of assembly, tetramer of two alpha and two beta chains. It depends on pyridoxal 5'-phosphate as a cofactor.

It catalyses the reaction (1S,2R)-1-C-(indol-3-yl)glycerol 3-phosphate + L-serine = D-glyceraldehyde 3-phosphate + L-tryptophan + H2O. The protein operates within amino-acid biosynthesis; L-tryptophan biosynthesis; L-tryptophan from chorismate: step 5/5. The beta subunit is responsible for the synthesis of L-tryptophan from indole and L-serine. This Bacillus subtilis (strain 168) protein is Tryptophan synthase beta chain (trpB).